The primary structure comprises 251 residues: Small ribosomal subunit protein uS2 (251 aa).

This sequence belongs to the universal ribosomal protein uS2 family.

This chain is Small ribosomal subunit protein uS2, found in Chlorobium chlorochromatii (strain CaD3).